Consider the following 384-residue polypeptide: Carbamoyl phosphate synthase small chain (384 aa).

Residues methionine 1–aspartate 195 are CPSase. Serine 50, glycine 247, and glycine 249 together coordinate L-glutamine. The 186-residue stretch at histidine 199–alanine 384 folds into the Glutamine amidotransferase type-1 domain. Cysteine 275 serves as the catalytic Nucleophile. 5 residues coordinate L-glutamine: leucine 276, glutamine 279, asparagine 317, glycine 319, and phenylalanine 320. Residues histidine 359 and glutamate 361 contribute to the active site.

The protein belongs to the CarA family. In terms of assembly, composed of two chains; the small (or glutamine) chain promotes the hydrolysis of glutamine to ammonia, which is used by the large (or ammonia) chain to synthesize carbamoyl phosphate. Tetramer of heterodimers (alpha,beta)4.

It catalyses the reaction hydrogencarbonate + L-glutamine + 2 ATP + H2O = carbamoyl phosphate + L-glutamate + 2 ADP + phosphate + 2 H(+). The enzyme catalyses L-glutamine + H2O = L-glutamate + NH4(+). Its pathway is amino-acid biosynthesis; L-arginine biosynthesis; carbamoyl phosphate from bicarbonate: step 1/1. It participates in pyrimidine metabolism; UMP biosynthesis via de novo pathway; (S)-dihydroorotate from bicarbonate: step 1/3. Small subunit of the glutamine-dependent carbamoyl phosphate synthetase (CPSase). CPSase catalyzes the formation of carbamoyl phosphate from the ammonia moiety of glutamine, carbonate, and phosphate donated by ATP, constituting the first step of 2 biosynthetic pathways, one leading to arginine and/or urea and the other to pyrimidine nucleotides. The small subunit (glutamine amidotransferase) binds and cleaves glutamine to supply the large subunit with the substrate ammonia. The polypeptide is Carbamoyl phosphate synthase small chain (Rubrivivax gelatinosus (strain NBRC 100245 / IL144)).